Consider the following 398-residue polypeptide: Protein ELC (398 aa).

The UEV domain occupies 18 to 162; it reads ALSQRGPSSV…ARDPPLYSRR (145 aa). Residues 157–202 form a disordered region; that stretch reads PLYSRRRPQPPPPSPPTVYDSSLSRPPSADQSLPRPFPPSPYGGGV. A compositionally biased stretch (polar residues) spans 175 to 187; sequence YDSSLSRPPSADQ. Residues 247–291 adopt a coiled-coil conformation; it reads EAEAEELLSLQAGLKRREDELNIGLKEMVEEKETLEQQLQIISMN. The SB domain occupies 322-390; it reads DTLSKQMLEC…RAAQMEVQVA (69 aa).

It belongs to the ubiquitin-conjugating enzyme family. UEV subfamily. In terms of assembly, component of the endosomal sorting required for transport complex I (ESCRT-I), composed of ELC, VPS28 and VPS37. Interacts with VPS28 and VPS37. Binds ubiquitin in vitro. Interacts with FREE1. Interacts with TOL9/TOM1D. Interacts with BRO1/ALIX. Interacts with SINAT1, SINAT2, SINAT3 and SINAT4. In terms of processing, ubiquitinated by SINAT1, SINAT2, SINAT3 and SINAT4 for subsequent proteasomal degradation. As to expression, expressed in roots, stems, leaves and flowers.

Its subcellular location is the early endosome. The protein resides in the late endosome. It localises to the prevacuolar compartment. Component of the ESCRT-I complex (endosomal sorting complex required for transport I), a regulator of vesicular trafficking process. Required for the sorting of endocytic ubiquitinated cargos into multivesicular bodies (MVBs). May control nuclear division through the microtubule cytoskeleton. The protein is Protein ELC of Arabidopsis thaliana (Mouse-ear cress).